The chain runs to 635 residues: Biosynthetic arginine decarboxylase (635 aa).

At lysine 103 the chain carries N6-(pyridoxal phosphate)lysine. 283 to 293 (FDVGGGLGVDY) is a binding site for substrate.

Belongs to the Orn/Lys/Arg decarboxylase class-II family. SpeA subfamily. Requires Mg(2+) as cofactor. Pyridoxal 5'-phosphate serves as cofactor.

It catalyses the reaction L-arginine + H(+) = agmatine + CO2. Its pathway is amine and polyamine biosynthesis; agmatine biosynthesis; agmatine from L-arginine: step 1/1. Functionally, catalyzes the biosynthesis of agmatine from arginine. The protein is Biosynthetic arginine decarboxylase of Proteus mirabilis (strain HI4320).